A 1089-amino-acid chain; its full sequence is Platelet-derived growth factor receptor alpha (1089 aa).

Positions 1-23 (MGTSHPAFLVLGCLLTGLSLILC) are cleaved as a signal peptide. 5 consecutive Ig-like C2-type domains span residues 24 to 113 (QLSL…NELE), 117 to 201 (IYIY…FQTI), 202 to 306 (PFNV…KKVT), 319 to 410 (PTFS…FELL), and 414 to 517 (PSSI…LKLV). Over 24 to 528 (QLSLPSILPN…PTLRSELTVA (505 aa)) the chain is Extracellular. 4 N-linked (GlcNAc...) asparagine glycosylation sites follow: Asn-42, Asn-76, Asn-103, and Asn-179. A disulfide bond links Cys-49 and Cys-100. Cystine bridges form between Cys-150–Cys-189 and Cys-235–Cys-290. Asn-353, Asn-359, Asn-458, and Asn-468 each carry an N-linked (GlcNAc...) asparagine glycan. A disulfide bridge links Cys-435 with Cys-501. The helical transmembrane segment at 529–549 (AAVLVLLVIVIISLIVLVVIW) threads the bilayer. Over 550-1089 (KQKPRYEIRW…SSDLVEDSFL (540 aa)) the chain is Cytoplasmic. A phosphotyrosine; by autocatalysis mark is found at Tyr-572 and Tyr-574. The Protein kinase domain maps to 593 to 954 (LVLGRVLGSG…HLSEIVENLL (362 aa)). ATP contacts are provided by residues 599 to 607 (LGSGAFGKV) and Lys-627. Tyr-720, Tyr-731, Tyr-742, Tyr-754, Tyr-762, and Tyr-768 each carry phosphotyrosine; by autocatalysis. Asp-818 acts as the Proton acceptor in catalysis. Phosphotyrosine; by autocatalysis occurs at positions 849, 988, and 1018. The segment at 1018–1089 (YIIPLPDIDP…SSDLVEDSFL (72 aa)) is disordered. Residues 1041–1059 (SSQTSEESAIETGSSSSTF) show a composition bias toward polar residues. Acidic residues predominate over residues 1065–1089 (ETIEDIDMMDDIGIDSSDLVEDSFL).

The protein belongs to the protein kinase superfamily. Tyr protein kinase family. CSF-1/PDGF receptor subfamily. In terms of assembly, interacts with homodimeric PDGFA, PDGFB and PDGFC, and with heterodimers formed by PDGFA and PDGFB. Monomer in the absence of bound ligand. Interaction with dimeric PDGFA, PDGFB and/or PDGFC leads to receptor dimerization, where both PDGFRA homodimers and heterodimers with PDGFRB are observed. Interacts (tyrosine phosphorylated) with SHB (via SH2 domain). Interacts (tyrosine phosphorylated) with SHF (via SH2 domain). Interacts (tyrosine phosphorylated) with SRC (via SH2 domain). Interacts (tyrosine phosphorylated) with PIK3R1. Interacts (tyrosine phosphorylated) with PLCG1 (via SH2 domain). Interacts (tyrosine phosphorylated) with CRK, GRB2 and GRB7. Interacts with CD248; this interaction promotes PDGF receptor signaling pathway. As to quaternary structure, (Microbial infection) Interacts with human cytomegalovirus/HHV-5 envelope glycoprotein B/gB. Also interacts with the trimeric complex gH-gL-gO. Trimer-PDGFRA interaction has an inhibitory effect on PDGFRA signaling. In terms of processing, N-glycosylated. Ubiquitinated, leading to its internalization and degradation. Post-translationally, autophosphorylated on tyrosine residues upon ligand binding. Autophosphorylation occurs in trans, i.e. one subunit of the dimeric receptor phosphorylates tyrosine residues on the other subunit. Phosphorylation at Tyr-731 and Tyr-742 is important for interaction with PIK3R1. Phosphorylation at Tyr-720 and Tyr-754 is important for interaction with PTPN11. Phosphorylation at Tyr-762 is important for interaction with CRK. Phosphorylation at Tyr-572 and Tyr-574 is important for interaction with SRC and SRC family members. Phosphorylation at Tyr-988 and Tyr-1018 is important for interaction with PLCG1. As to expression, detected in platelets (at protein level). Widely expressed. Detected in brain, fibroblasts, smooth muscle, heart, and embryo. Expressed in primary and metastatic colon tumors and in normal colon tissue.

The protein resides in the cell membrane. Its subcellular location is the cell projection. It localises to the cilium. It is found in the golgi apparatus. It catalyses the reaction L-tyrosyl-[protein] + ATP = O-phospho-L-tyrosyl-[protein] + ADP + H(+). Its activity is regulated as follows. Present in an inactive conformation in the absence of bound ligand. Binding of PDGFA and/or PDGFB leads to dimerization and activation by autophosphorylation on tyrosine residues. Inhibited by imatinib, nilotinib and sorafenib. Its function is as follows. Tyrosine-protein kinase that acts as a cell-surface receptor for PDGFA, PDGFB and PDGFC and plays an essential role in the regulation of embryonic development, cell proliferation, survival and chemotaxis. Depending on the context, promotes or inhibits cell proliferation and cell migration. Plays an important role in the differentiation of bone marrow-derived mesenchymal stem cells. Required for normal skeleton development and cephalic closure during embryonic development. Required for normal development of the mucosa lining the gastrointestinal tract, and for recruitment of mesenchymal cells and normal development of intestinal villi. Plays a role in cell migration and chemotaxis in wound healing. Plays a role in platelet activation, secretion of agonists from platelet granules, and in thrombin-induced platelet aggregation. Binding of its cognate ligands - homodimeric PDGFA, homodimeric PDGFB, heterodimers formed by PDGFA and PDGFB or homodimeric PDGFC -leads to the activation of several signaling cascades; the response depends on the nature of the bound ligand and is modulated by the formation of heterodimers between PDGFRA and PDGFRB. Phosphorylates PIK3R1, PLCG1, and PTPN11. Activation of PLCG1 leads to the production of the cellular signaling molecules diacylglycerol and inositol 1,4,5-trisphosphate, mobilization of cytosolic Ca(2+) and the activation of protein kinase C. Phosphorylates PIK3R1, the regulatory subunit of phosphatidylinositol 3-kinase, and thereby mediates activation of the AKT1 signaling pathway. Mediates activation of HRAS and of the MAP kinases MAPK1/ERK2 and/or MAPK3/ERK1. Promotes activation of STAT family members STAT1, STAT3 and STAT5A and/or STAT5B. Receptor signaling is down-regulated by protein phosphatases that dephosphorylate the receptor and its down-stream effectors, and by rapid internalization of the activated receptor. The protein is Platelet-derived growth factor receptor alpha (PDGFRA) of Homo sapiens (Human).